The chain runs to 202 residues: LexA repressor 1 (202 aa).

The H-T-H motif DNA-binding region spans 28–48 (RAEIAQELGFKSPNAAEEHLK). Residues serine 123 and lysine 160 each act as for autocatalytic cleavage activity in the active site.

This sequence belongs to the peptidase S24 family. Homodimer.

It catalyses the reaction Hydrolysis of Ala-|-Gly bond in repressor LexA.. Represses a number of genes involved in the response to DNA damage (SOS response), including recA and lexA. In the presence of single-stranded DNA, RecA interacts with LexA causing an autocatalytic cleavage which disrupts the DNA-binding part of LexA, leading to derepression of the SOS regulon and eventually DNA repair. The chain is LexA repressor 1 from Pseudomonas syringae pv. tomato (strain ATCC BAA-871 / DC3000).